We begin with the raw amino-acid sequence, 457 residues long: Multidrug resistance protein MdtK (457 aa).

Transmembrane regions (helical) follow at residues 11–31 (LLAL…MGVV), 46–66 (AVAV…GLLL), 93–113 (WLAL…DHVI), 127–147 (AVGF…FQVL), 160–180 (GMVI…IFIY), 188–208 (LGGV…FLMM), 243–263 (LPVA…ALLV), 283–301 (LMFM…RVGF), 316–336 (YTSM…TIVF), 357–377 (LMLL…GSGV), 387–407 (IFFI…YLLG), and 418–438 (PAGF…LMVL).

The protein belongs to the multi antimicrobial extrusion (MATE) (TC 2.A.66.1) family. MdtK subfamily.

It localises to the cell inner membrane. In terms of biological role, multidrug efflux pump that functions probably as a Na(+)/drug antiporter. This Yersinia pseudotuberculosis serotype O:1b (strain IP 31758) protein is Multidrug resistance protein MdtK.